The primary structure comprises 126 residues: Small ribosomal subunit protein uS8 (126 aa).

Belongs to the universal ribosomal protein uS8 family. As to quaternary structure, part of the 30S ribosomal subunit. Contacts proteins S5 and S12.

One of the primary rRNA binding proteins, it binds directly to 16S rRNA central domain where it helps coordinate assembly of the platform of the 30S subunit. The sequence is that of Small ribosomal subunit protein uS8 from Nitratidesulfovibrio vulgaris (strain ATCC 29579 / DSM 644 / CCUG 34227 / NCIMB 8303 / VKM B-1760 / Hildenborough) (Desulfovibrio vulgaris).